The chain runs to 242 residues: Biosynthetic peptidoglycan transglycosylase (242 aa).

The chain crosses the membrane as a helical span at residues 18 to 38 (VIMAVLCIAILYQLWMFSLVV).

The protein belongs to the glycosyltransferase 51 family.

Its subcellular location is the cell inner membrane. It carries out the reaction [GlcNAc-(1-&gt;4)-Mur2Ac(oyl-L-Ala-gamma-D-Glu-L-Lys-D-Ala-D-Ala)](n)-di-trans,octa-cis-undecaprenyl diphosphate + beta-D-GlcNAc-(1-&gt;4)-Mur2Ac(oyl-L-Ala-gamma-D-Glu-L-Lys-D-Ala-D-Ala)-di-trans,octa-cis-undecaprenyl diphosphate = [GlcNAc-(1-&gt;4)-Mur2Ac(oyl-L-Ala-gamma-D-Glu-L-Lys-D-Ala-D-Ala)](n+1)-di-trans,octa-cis-undecaprenyl diphosphate + di-trans,octa-cis-undecaprenyl diphosphate + H(+). Its pathway is cell wall biogenesis; peptidoglycan biosynthesis. Its function is as follows. Peptidoglycan polymerase that catalyzes glycan chain elongation from lipid-linked precursors. This Bordetella bronchiseptica (strain ATCC BAA-588 / NCTC 13252 / RB50) (Alcaligenes bronchisepticus) protein is Biosynthetic peptidoglycan transglycosylase.